Here is an 85-residue protein sequence, read N- to C-terminus: Small ribosomal subunit protein uS17 (85 aa).

Belongs to the universal ribosomal protein uS17 family. Part of the 30S ribosomal subunit.

In terms of biological role, one of the primary rRNA binding proteins, it binds specifically to the 5'-end of 16S ribosomal RNA. In Actinobacillus succinogenes (strain ATCC 55618 / DSM 22257 / CCUG 43843 / 130Z), this protein is Small ribosomal subunit protein uS17.